A 256-amino-acid chain; its full sequence is 5'-nucleotidase SurE (256 aa).

Asp-9, Asp-10, Ser-42, and Asn-99 together coordinate a divalent metal cation.

Belongs to the SurE nucleotidase family. The cofactor is a divalent metal cation.

It is found in the cytoplasm. It catalyses the reaction a ribonucleoside 5'-phosphate + H2O = a ribonucleoside + phosphate. Nucleotidase that shows phosphatase activity on nucleoside 5'-monophosphates. The sequence is that of 5'-nucleotidase SurE from Symbiobacterium thermophilum (strain DSM 24528 / JCM 14929 / IAM 14863 / T).